The primary structure comprises 121 residues: Colipase-like protein 1 (121 aa).

Positions 1–23 (MMLPQWLLLLFLLFFFLFLLTRG) are cleaved as a signal peptide. Disulfide bonds link cysteine 39–cysteine 50, cysteine 45–cysteine 61, cysteine 49–cysteine 83, cysteine 71–cysteine 91, and cysteine 85–cysteine 107.

This sequence belongs to the colipase family. Exclusively expressed in epididymis, in the corpus region.

It localises to the secreted. This is Colipase-like protein 1 (CLPSL1) from Homo sapiens (Human).